An 806-amino-acid chain; its full sequence is Dimethyl sulfoxide reductase DmsA (806 aa).

Residues 1–35 (MSNFNQISRRDFVKASSAGAALAVSNLTLPFNVMA) constitute a signal peptide (tat-type signal). The 4Fe-4S Mo/W bis-MGD-type domain occupies 47 to 109 (ERIVWSACTV…SMRRRVYNPD (63 aa)). Positions 54, 58, 62, and 95 each coordinate [4Fe-4S] cluster. Mo-bis(molybdopterin guanine dinucleotide)-binding positions include 163–167 (LGGTM), S196, 236–237 (ET), 262–263 (ID), 283–285 (GTD), 378–379 (WG), R382, N480, 504–505 (ID), H693, 699–701 (HST), N780, and 796–797 (QH). The tract at residues 786–806 (RPSPLAKGNPQHSNLVQVERL) is disordered. Residues 795 to 806 (PQHSNLVQVERL) show a composition bias toward polar residues.

Belongs to the prokaryotic molybdopterin-containing oxidoreductase family. As to quaternary structure, heterotrimeric enzyme composed of a catalytic heterodimer (DmsAB) and a membrane anchor protein (DmsC). [4Fe-4S] cluster serves as cofactor. The cofactor is Mo-bis(molybdopterin guanine dinucleotide). Post-translationally, predicted to be exported by the Tat system. The position of the signal peptide cleavage has not been experimentally proven.

It is found in the cell membrane. It catalyses the reaction dimethyl sulfide + a menaquinone + H2O = dimethyl sulfoxide + a menaquinol. Its function is as follows. Catalyzes the reduction of dimethyl sulfoxide (DMSO) to dimethyl sulfide (DMS). The terminal DMSO reductase can also use various sulfoxides and N-oxide compounds as terminal electron acceptor in addition to DMSO. The protein is Dimethyl sulfoxide reductase DmsA (dmsA) of Haemophilus influenzae (strain ATCC 51907 / DSM 11121 / KW20 / Rd).